We begin with the raw amino-acid sequence, 959 residues long: AP2-associated protein kinase 1 (959 aa).

The residue at position 1 (Met1) is an N-acetylmethionine. Positions 1-11 (MKKFFDSRREQ) are enriched in basic and acidic residues. Residues 1–27 (MKKFFDSRREQGSSGLGSGSSGGGGSS) form a disordered region. Ser14 is subject to Phosphoserine. A compositionally biased stretch (gly residues) spans 14–27 (SGLGSGSSGGGGSS). One can recognise a Protein kinase domain in the interval 46-315 (VTVDEVLAEG…QVSYFSFKLL (270 aa)). Residues 52–60 (LAEGGFALV) and Lys74 each bind ATP. The active-site Proton acceptor is the Asp176. A Phosphotyrosine modification is found at Tyr234. Ser235 bears the Phosphoserine mark. The interval 340 to 385 (SEAAVKKTQPKARLTDPIPTTETSIAPRQRPKAGQTQPNPGILPIQ) is disordered. A phosphothreonine mark is found at Thr354 and Thr389. Arg391 bears the Omega-N-methylarginine mark. Disordered regions lie at residues 398-514 (PLPQ…AVHP) and 578-630 (TAPQ…RAGH). A compositionally biased stretch (polar residues) spans 404–419 (GPSNQPGLLPSVSQPK). Low complexity predominate over residues 420–435 (AQATPSQPLQSSQPKQ). Thr441 carries the post-translational modification Phosphothreonine. 3 stretches are compositionally biased toward low complexity: residues 444 to 481 (QTPA…QPQQ), 494 to 510 (QQQQ…QQFQ), and 578 to 603 (TAPQ…KVQT). A Phosphothreonine modification is found at Thr604. The segment covering 609 to 625 (IQGQKVGSLTPPSSPKT) has biased composition (polar residues). Ser616 is modified (phosphoserine). Thr618 is subject to Phosphothreonine. Phosphoserine occurs at positions 621, 622, 635, and 648. Thr651 carries the phosphothreonine modification. 4 disordered regions span residues 662 to 699 (SLNK…FDDD), 727 to 763 (GGSA…GGQA), 837 to 857 (PVAQ…TDSL), and 923 to 943 (ITKN…ESSL). Residues 670-694 (TTTPSGSPRTSQQNVSNASEGSTWN) are compositionally biased toward polar residues. A Phosphoserine modification is found at Ser729. Polar residues-rich tracts occupy residues 738 to 752 (QPTQ…SFSA) and 842 to 857 (LPSQ…TDSL). The segment at 821 to 958 (DKADVAVESL…SLLLVDQLID (138 aa)) is clathrin-binding domain (CBD). A phosphoserine mark is found at Ser844, Ser935, and Ser936. The segment covering 929–942 (GGHSRNSSGSSESS) has biased composition (low complexity).

This sequence belongs to the protein kinase superfamily. Ser/Thr protein kinase family. As to quaternary structure, interacts (via CBD domain) with clathrin. Interacts with AP-2 complex. Interacts with NUMB. Interacts with alpha-adaptin. Interacts with EPS15 isoform 2. Interacts with membrane-bound activated NOTCH1 but not with the inactive full-length form of NOTCH1. Preferentially interacts with monoubiquitinated activated NOTCH1 compared to the non-ubiquitinated form. Post-translationally, autophosphorylated.

The protein localises to the cell membrane. The protein resides in the membrane. It is found in the clathrin-coated pit. It localises to the presynapse. The enzyme catalyses L-seryl-[protein] + ATP = O-phospho-L-seryl-[protein] + ADP + H(+). It catalyses the reaction L-threonyl-[protein] + ATP = O-phospho-L-threonyl-[protein] + ADP + H(+). Its activity is regulated as follows. Stimulated by clathrin. Its function is as follows. Regulates clathrin-mediated endocytosis by phosphorylating the AP2M1/mu2 subunit of the adaptor protein complex 2 (AP-2) which ensures high affinity binding of AP-2 to cargo membrane proteins during the initial stages of endocytosis. Preferentially, may phosphorylate substrates on threonine residues. Regulates phosphorylation of other AP-2 subunits as well as AP-2 localization and AP-2-mediated internalization of ligand complexes. Phosphorylates NUMB and regulates its cellular localization, promoting NUMB localization to endosomes. Binds to and stabilizes the activated form of NOTCH1, increases its localization in endosomes and regulates its transcriptional activity. This Mus musculus (Mouse) protein is AP2-associated protein kinase 1 (Aak1).